We begin with the raw amino-acid sequence, 371 residues long: Putrescine N-methyltransferase 2 (371 aa).

Polar residues-rich tracts occupy residues 1-14 and 23-70; these read MEVI…STIF and GHQN…HDNG. The segment at 1–70 is disordered; it reads MEVISTNTNG…QNGTISHDNG (70 aa). A PABS domain is found at 82–319; that stretch reads PGWFSEFSAL…GVIGYMLCST (238 aa). S-adenosyl-L-methionine contacts are provided by residues Gln-113, Glu-188, and 219–220; that span reads DG. Asp-238 acts as the Proton acceptor in catalysis. Tyr-307 lines the S-adenosyl-L-methionine pocket.

Belongs to the class I-like SAM-binding methyltransferase superfamily. Spermidine/spermine synthase family. Mainly expressed in roots.

The enzyme catalyses putrescine + S-adenosyl-L-methionine = N-methylputrescine + S-adenosyl-L-homocysteine + H(+). Its pathway is alkaloid biosynthesis; nicotine biosynthesis. Functionally, involved in the biosynthesis of pyridine alkaloid natural products, leading mainly to the production of anabasine, anatabine, nicotine and nornicotine, effective deterrents against herbivores with antiparasitic and pesticide properties (neurotoxins); nornicotine serves as the precursor in the synthesis of the carcinogen compound N'-nitrosonornicotine (NNN). Methyltransferase that mediates the conversion of putrescine to N-methylputrescine. This Nicotiana attenuata (Coyote tobacco) protein is Putrescine N-methyltransferase 2.